Reading from the N-terminus, the 379-residue chain is 3-dehydroquinate synthase (379 aa).

NAD(+) is bound by residues 67 to 72 (PGEKNK), 101 to 105 (GIILD), 125 to 126 (TT), Lys138, and Lys147. Glu180, His242, and His258 together coordinate Zn(2+).

It belongs to the sugar phosphate cyclases superfamily. Dehydroquinate synthase family. NAD(+) serves as cofactor. It depends on Co(2+) as a cofactor. The cofactor is Zn(2+).

The protein localises to the cytoplasm. The catalysed reaction is 7-phospho-2-dehydro-3-deoxy-D-arabino-heptonate = 3-dehydroquinate + phosphate. Its pathway is metabolic intermediate biosynthesis; chorismate biosynthesis; chorismate from D-erythrose 4-phosphate and phosphoenolpyruvate: step 2/7. In terms of biological role, catalyzes the conversion of 3-deoxy-D-arabino-heptulosonate 7-phosphate (DAHP) to dehydroquinate (DHQ). The protein is 3-dehydroquinate synthase of Chlamydia caviae (strain ATCC VR-813 / DSM 19441 / 03DC25 / GPIC) (Chlamydophila caviae).